An 85-amino-acid chain; its full sequence is MLAGMPSLSHEEQQEAVERIHQFMSEGMSSGEAIALVAAEIRERHQNDPQAMAIFEDTDFDEHDESDYRRDNEQDADEIEDPYEG.

2 disordered regions span residues 1-22 (MLAG…RIHQ) and 57-85 (DTDF…PYEG). Residues 9–21 (SHEEQQEAVERIH) show a composition bias toward basic and acidic residues. Residues 74–85 (QDADEIEDPYEG) are compositionally biased toward acidic residues.

This sequence belongs to the UPF0181 family.

The chain is UPF0181 protein YE1782 from Yersinia enterocolitica serotype O:8 / biotype 1B (strain NCTC 13174 / 8081).